We begin with the raw amino-acid sequence, 218 residues long: Putative pre-16S rRNA nuclease (218 aa).

It belongs to the YqgF nuclease family.

It localises to the cytoplasm. Its function is as follows. Could be a nuclease involved in processing of the 5'-end of pre-16S rRNA. The polypeptide is Putative pre-16S rRNA nuclease (Thermotoga maritima (strain ATCC 43589 / DSM 3109 / JCM 10099 / NBRC 100826 / MSB8)).